Here is a 41-residue protein sequence, read N- to C-terminus: Large ribosomal subunit protein bL36A (41 aa).

Belongs to the bacterial ribosomal protein bL36 family.

This is Large ribosomal subunit protein bL36A from Aeromonas salmonicida (strain A449).